Reading from the N-terminus, the 273-residue chain is Large ribosomal subunit protein uL2 (273 aa).

The tract at residues 228–273 is disordered; the sequence is VDHPHGGGEGKTSGGRHPVTPWGFPTKGKKTRKNKRTSKFIIKKRK. A compositionally biased stretch (basic residues) spans 254–273; that stretch reads KGKKTRKNKRTSKFIIKKRK.

This sequence belongs to the universal ribosomal protein uL2 family. In terms of assembly, part of the 50S ribosomal subunit. Forms a bridge to the 30S subunit in the 70S ribosome.

In terms of biological role, one of the primary rRNA binding proteins. Required for association of the 30S and 50S subunits to form the 70S ribosome, for tRNA binding and peptide bond formation. It has been suggested to have peptidyltransferase activity; this is somewhat controversial. Makes several contacts with the 16S rRNA in the 70S ribosome. This Rickettsia bellii (strain OSU 85-389) protein is Large ribosomal subunit protein uL2.